The primary structure comprises 347 residues: Protein RecA (347 aa).

Residue 66–73 (GPESSGKT) coordinates ATP. The disordered stretch occupies residues 328 to 347 (MPKPNAPKATDEALDETGTD).

This sequence belongs to the RecA family.

The protein resides in the cytoplasm. In terms of biological role, can catalyze the hydrolysis of ATP in the presence of single-stranded DNA, the ATP-dependent uptake of single-stranded DNA by duplex DNA, and the ATP-dependent hybridization of homologous single-stranded DNAs. It interacts with LexA causing its activation and leading to its autocatalytic cleavage. The sequence is that of Protein RecA from Hydrogenovibrio crunogenus (strain DSM 25203 / XCL-2) (Thiomicrospira crunogena).